A 492-amino-acid polypeptide reads, in one-letter code: Protein odr-4 homolog (492 aa).

A disordered region spans residues 251–270; that stretch reads LQPTSTTGGTATASSNTTDS. Positions 254-268 are enriched in low complexity; the sequence is TSTTGGTATASSNTT. Residues 469–489 form a helical membrane-spanning segment; that stretch reads MVGIAVALLVLLSSVALHFVL.

This sequence belongs to the ODR-4 family.

The protein localises to the membrane. Functionally, may play a role in the trafficking of a subset of G-protein coupled receptors. The sequence is that of Protein odr-4 homolog from Drosophila melanogaster (Fruit fly).